A 359-amino-acid chain; its full sequence is Biotin synthase (359 aa).

The region spanning 67–302 (CCGNRVDLCS…QQILRYAGGR (236 aa)) is the Radical SAM core domain. Positions 85, 89, and 92 each coordinate [4Fe-4S] cluster. Residues C130, C167, C227, and R297 each coordinate [2Fe-2S] cluster.

Belongs to the radical SAM superfamily. Biotin synthase family. Homodimer. [4Fe-4S] cluster serves as cofactor. Requires [2Fe-2S] cluster as cofactor.

It carries out the reaction (4R,5S)-dethiobiotin + (sulfur carrier)-SH + 2 reduced [2Fe-2S]-[ferredoxin] + 2 S-adenosyl-L-methionine = (sulfur carrier)-H + biotin + 2 5'-deoxyadenosine + 2 L-methionine + 2 oxidized [2Fe-2S]-[ferredoxin]. Its pathway is cofactor biosynthesis; biotin biosynthesis; biotin from 7,8-diaminononanoate: step 2/2. In terms of biological role, catalyzes the conversion of dethiobiotin (DTB) to biotin by the insertion of a sulfur atom into dethiobiotin via a radical-based mechanism. This Gloeothece citriformis (strain PCC 7424) (Cyanothece sp. (strain PCC 7424)) protein is Biotin synthase.